We begin with the raw amino-acid sequence, 425 residues long: MASSSLQSLFSLFCLALFSLPLIVSSIGINYGQVANNLPPPKNVIPLLKSVGATKVKLYDADPQALRAFAGSGFELTVALGNEYLAQMSDPIKAQGWVKENVQAYLPNTKIVAIVVGNEVLTSNQSALTAALFPAMQSIHGALVDCGLNKQIFVTTAHSLAILDVSYPPSATSFRRDLLGSLTPILDFHVKTGSPILINAYPFFAYEENPKHVSLDFVLFQPNQGFTDPGSNFHYDNMLFAQVDAVYHALDAVGISYKKVPIVVSETGWPSNGDPQEVGATCDNARKYNGNLIKMMMSKKMRTPIRPECDLTIFVFALFNENMKPGPTSERNYGLFNPDGTPVYSLGIKTSSTHSSGSGSSNSTGGSSSGGGGNTGGSSSGGGIYQPVTGNPSPDYMSISSAGGKGRFVECVLFFFLLCIIKLRL.

A signal peptide spans 1–26; the sequence is MASSSLQSLFSLFCLALFSLPLIVSS. The active-site Proton donor is the glutamate 119. An N-linked (GlcNAc...) asparagine glycan is attached at asparagine 124. Glutamate 266 (nucleophile) is an active-site residue. Residues 347 to 387 are disordered; sequence GIKTSSTHSSGSGSSNSTGGSSSGGGGNTGGSSSGGGIYQP. The segment covering 350 to 366 has biased composition (low complexity); sequence TSSTHSSGSGSSNSTGG. A glycan (N-linked (GlcNAc...) asparagine) is linked at asparagine 362. Positions 367 to 384 are enriched in gly residues; that stretch reads SSSGGGGNTGGSSSGGGI. Serine 401 is lipidated: GPI-anchor amidated serine. Residues 402–425 constitute a propeptide, removed in mature form; that stretch reads AGGKGRFVECVLFFFLLCIIKLRL.

It belongs to the glycosyl hydrolase 17 family. As to expression, highly expressed in flowers and siliques.

The protein localises to the cell membrane. It is found in the cell junction. Its subcellular location is the plasmodesma. It carries out the reaction Hydrolysis of (1-&gt;3)-beta-D-glucosidic linkages in (1-&gt;3)-beta-D-glucans.. Functionally, plasmodesmal-associated membrane beta-1,3-glucanase involved in plasmodesmal callose degradation and functions in the gating of plasmodesmata. The protein is Glucan endo-1,3-beta-glucosidase 10 of Arabidopsis thaliana (Mouse-ear cress).